Reading from the N-terminus, the 511-residue chain is Cytochrome P450 monooxygenase cypX (511 aa).

Residues 18-38 (LPFSLALVAAAFVLYNIVSII) traverse the membrane as a helical segment. Residues Asn-162 and Asn-407 are each glycosylated (N-linked (GlcNAc...) asparagine). Cys-454 contacts heme.

Belongs to the cytochrome P450 family. It depends on heme as a cofactor.

The protein localises to the membrane. It participates in mycotoxin biosynthesis. In terms of biological role, cytochrome P450 monooxygenase; part of the fragmented gene cluster that mediates the biosynthesis of dothistromin (DOTH), a polyketide toxin very similar in structure to the aflatoxin precursor, versicolorin B. The first step of the pathway is the conversion of acetate to norsolorinic acid (NOR) and requires the fatty acid synthase subunits hexA and hexB, as well as the polyketide synthase pksA. PksA combines a hexanoyl starter unit and 7 malonyl-CoA extender units to synthesize the precursor NOR. The hexanoyl starter unit is provided to the acyl-carrier protein (ACP) domain by the fungal fatty acid synthase hexA/hexB. The second step is the conversion of NOR to averantin (AVN) and requires the norsolorinic acid ketoreductase nor1, which catalyzes the dehydration of norsolorinic acid to form (1'S)-averantin. The cytochrome P450 monooxygenase avnA then catalyzes the hydroxylation of AVN to 5'hydroxyaverantin (HAVN). The next step is performed by adhA that transforms HAVN to averufin (AVF). Averufin might then be converted to hydroxyversicolorone by cypX and avfA. Hydroxyversicolorone is further converted versiconal hemiacetal acetate (VHA) by moxY. VHA is then the substrate for the versiconal hemiacetal acetate esterase est1 to yield versiconal (VAL). Versicolorin B synthase vbsA then converts VAL to versicolorin B (VERB) by closing the bisfuran ring. Then, the activity of the versicolorin B desaturase verB leads to versicolorin A (VERA). DotB, a predicted chloroperoxidase, may perform epoxidation of the A-ring of VERA. Alternatively, a cytochrome P450, such as cypX or avnA could catalyze this step. It is also possible that another, uncharacterized, cytochrome P450 enzyme is responsible for this step. Opening of the epoxide could potentially be achieved by the epoxide hydrolase epoA. However, epoA seems not to be required for DOTH biosynthesis, but other epoxide hydrolases may have the ability to complement this hydrolysis. Alternatively, opening of the epoxide ring could be achieved non-enzymatically. The next step is the deoxygenation of ring A to yield the 5,8-dihydroxyanthraquinone which is most likely catalyzed by the NADPH dehydrogenase encoded by ver1. The last stages of DOTH biosynthesis are proposed to involve hydroxylation of the bisfuran. OrdB and norB might have oxidative roles here. An alternative possibility is that cytochrome P450 monoogenases such as avnA and cypX might perform these steps in addition to previously proposed steps. The sequence is that of Cytochrome P450 monooxygenase cypX from Dothistroma septosporum (Red band needle blight fungus).